The sequence spans 80 residues: Growth factor (80 aa).

The signal sequence occupies residues Met-1–Ala-19. Positions His-29–Gln-73 constitute an EGF-like domain. Disulfide bonds link Cys-33-Cys-47, Cys-41-Cys-61, and Cys-63-Cys-72. 2 N-linked (GlcNAc...) asparagine; by host glycosylation sites follow: Asn-44 and Asn-54.

It is found in the secreted. The sequence is that of Growth factor from Oryctolagus cuniculus (Rabbit).